We begin with the raw amino-acid sequence, 188 residues long: Proline-rich protein 3 (188 aa).

Residues 1-157 (MPKRKKQNQH…DPQVMEDKSD (157 aa)) are disordered. Composition is skewed to pro residues over residues 35–46 (IGPPSLLGPPPM) and 69–82 (LIPP…PPWG). The span at 83–96 (RGPIRRGLGPRSSP) shows a compositional bias: low complexity. The segment covering 145–157 (PKDDPQVMEDKSD) has biased composition (basic and acidic residues). A C3H1-type zinc finger spans residues 155–183 (KSDRPVCRHFAKKGHCRYEDLCAFYHPGV).

This Pan troglodytes (Chimpanzee) protein is Proline-rich protein 3 (PRR3).